A 211-amino-acid polypeptide reads, in one-letter code: FMN-dependent NADH:quinone oxidoreductase 3 (211 aa).

102–105 (MWNF) lines the FMN pocket.

This sequence belongs to the azoreductase type 1 family. In terms of assembly, homodimer. FMN serves as cofactor.

It catalyses the reaction 2 a quinone + NADH + H(+) = 2 a 1,4-benzosemiquinone + NAD(+). The catalysed reaction is N,N-dimethyl-1,4-phenylenediamine + anthranilate + 2 NAD(+) = 2-(4-dimethylaminophenyl)diazenylbenzoate + 2 NADH + 2 H(+). Quinone reductase that provides resistance to thiol-specific stress caused by electrophilic quinones. Functionally, also exhibits azoreductase activity. Catalyzes the reductive cleavage of the azo bond in aromatic azo compounds to the corresponding amines. This Bacillus cereus (strain ZK / E33L) protein is FMN-dependent NADH:quinone oxidoreductase 3.